We begin with the raw amino-acid sequence, 284 residues long: Phosphatidylglycerol--prolipoprotein diacylglyceryl transferase (284 aa).

7 helical membrane passes run 19–39 (ISFY…MWFL), 60–80 (LLYL…VLFY), 98–118 (GGMS…WFSY), 130–150 (FIVP…FING), 199–219 (QLYE…IFSC), 225–245 (GSIS…IEFF), and 258–278 (FITL…IIMY). Arg143 serves as a coordination point for a 1,2-diacyl-sn-glycero-3-phospho-(1'-sn-glycerol).

This sequence belongs to the Lgt family.

It localises to the cell inner membrane. It catalyses the reaction L-cysteinyl-[prolipoprotein] + a 1,2-diacyl-sn-glycero-3-phospho-(1'-sn-glycerol) = an S-1,2-diacyl-sn-glyceryl-L-cysteinyl-[prolipoprotein] + sn-glycerol 1-phosphate + H(+). Its pathway is protein modification; lipoprotein biosynthesis (diacylglyceryl transfer). Catalyzes the transfer of the diacylglyceryl group from phosphatidylglycerol to the sulfhydryl group of the N-terminal cysteine of a prolipoprotein, the first step in the formation of mature lipoproteins. This chain is Phosphatidylglycerol--prolipoprotein diacylglyceryl transferase, found in Blochmanniella floridana.